Reading from the N-terminus, the 422-residue chain is Histidine--tRNA ligase (422 aa).

Belongs to the class-II aminoacyl-tRNA synthetase family. As to quaternary structure, homodimer.

It localises to the cytoplasm. It carries out the reaction tRNA(His) + L-histidine + ATP = L-histidyl-tRNA(His) + AMP + diphosphate + H(+). This Vibrio vulnificus (strain CMCP6) protein is Histidine--tRNA ligase.